The chain runs to 336 residues: Immune-associated nucleotide-binding protein 6 (336 aa).

Residues 33–241 (EPVKNVVLVG…FTDTMHRRIQ (209 aa)) enclose the AIG1-type G domain. Residues 42–49 (GRTGNGKS) are G1. Residues 42–50 (GRTGNGKSA) and Ser-63 each bind GTP. Residues 69 to 73 (GVTTR) are G2. Residues 91 to 94 (DTPG) are G3. Residues 161 to 164 (TCGD) are G4. Residues 200-202 (DNR) form a G5 region. Asn-201 contributes to the GTP binding site. Positions 237–270 (HRRIQEEAARVKREEKEIEEKNIADEEKAALKKQ) form a coiled coil.

This sequence belongs to the TRAFAC class TrmE-Era-EngA-EngB-Septin-like GTPase superfamily. AIG1/Toc34/Toc159-like paraseptin GTPase family. IAN subfamily. In terms of tissue distribution, mostly expressed in pollen. Also detected in lateral roots and radicles.

The polypeptide is Immune-associated nucleotide-binding protein 6 (Arabidopsis thaliana (Mouse-ear cress)).